The sequence spans 367 residues: UDP-N-acetylglucosamine--N-acetylmuramyl-(pentapeptide) pyrophosphoryl-undecaprenol N-acetylglucosamine transferase (367 aa).

Residues 15 to 17 (TGG), Asn-127, Arg-163, Ser-191, Ile-249, and Gln-294 contribute to the UDP-N-acetyl-alpha-D-glucosamine site.

This sequence belongs to the glycosyltransferase 28 family. MurG subfamily.

It localises to the cell inner membrane. The catalysed reaction is di-trans,octa-cis-undecaprenyl diphospho-N-acetyl-alpha-D-muramoyl-L-alanyl-D-glutamyl-meso-2,6-diaminopimeloyl-D-alanyl-D-alanine + UDP-N-acetyl-alpha-D-glucosamine = di-trans,octa-cis-undecaprenyl diphospho-[N-acetyl-alpha-D-glucosaminyl-(1-&gt;4)]-N-acetyl-alpha-D-muramoyl-L-alanyl-D-glutamyl-meso-2,6-diaminopimeloyl-D-alanyl-D-alanine + UDP + H(+). Its pathway is cell wall biogenesis; peptidoglycan biosynthesis. Cell wall formation. Catalyzes the transfer of a GlcNAc subunit on undecaprenyl-pyrophosphoryl-MurNAc-pentapeptide (lipid intermediate I) to form undecaprenyl-pyrophosphoryl-MurNAc-(pentapeptide)GlcNAc (lipid intermediate II). The protein is UDP-N-acetylglucosamine--N-acetylmuramyl-(pentapeptide) pyrophosphoryl-undecaprenol N-acetylglucosamine transferase of Burkholderia orbicola (strain MC0-3).